The following is a 348-amino-acid chain: Dihydroorotase (348 aa).

Positions 17 and 19 each coordinate Zn(2+). Substrate is bound by residues 19–21 and Asn-45; that span reads HLR. Residues Lys-103, His-140, and His-178 each coordinate Zn(2+). Lys-103 bears the N6-carboxylysine mark. Residue His-140 participates in substrate binding. Leu-223 is a substrate binding site. Asp-251 is a Zn(2+) binding site. The active site involves Asp-251. Residues His-255 and Ala-267 each coordinate substrate.

Belongs to the metallo-dependent hydrolases superfamily. DHOase family. Class II DHOase subfamily. In terms of assembly, homodimer. Zn(2+) serves as cofactor.

The enzyme catalyses (S)-dihydroorotate + H2O = N-carbamoyl-L-aspartate + H(+). It participates in pyrimidine metabolism; UMP biosynthesis via de novo pathway; (S)-dihydroorotate from bicarbonate: step 3/3. Its function is as follows. Catalyzes the reversible cyclization of carbamoyl aspartate to dihydroorotate. The sequence is that of Dihydroorotase from Edwardsiella ictaluri (strain 93-146).